Reading from the N-terminus, the 1390-residue chain is DNA-directed RNA polymerase subunit beta (1390 aa).

It belongs to the RNA polymerase beta chain family. In terms of assembly, the RNAP catalytic core consists of 2 alpha, 1 beta, 1 beta' and 1 omega subunit. When a sigma factor is associated with the core the holoenzyme is formed, which can initiate transcription.

The enzyme catalyses RNA(n) + a ribonucleoside 5'-triphosphate = RNA(n+1) + diphosphate. Functionally, DNA-dependent RNA polymerase catalyzes the transcription of DNA into RNA using the four ribonucleoside triphosphates as substrates. This Methylobacillus flagellatus (strain ATCC 51484 / DSM 6875 / VKM B-1610 / KT) protein is DNA-directed RNA polymerase subunit beta.